A 68-amino-acid polypeptide reads, in one-letter code: uncharacterized protein (68 aa).

The tract at residues 1-42 (MHLCQNGHYYKPHRASAEKVPYLKKKKKNSRNEGKAKKKNEK) is disordered.

This is an uncharacterized protein from Saccharomyces cerevisiae (strain ATCC 204508 / S288c) (Baker's yeast).